An 856-amino-acid polypeptide reads, in one-letter code: Leucine--tRNA ligase (856 aa).

The 'HIGH' region motif lies at 42-52; sequence PYPSGNLHMGH. Residues 617–621 carry the 'KMSKS' region motif; the sequence is KMSKS. Position 620 (Lys620) interacts with ATP.

The protein belongs to the class-I aminoacyl-tRNA synthetase family.

The protein resides in the cytoplasm. The catalysed reaction is tRNA(Leu) + L-leucine + ATP = L-leucyl-tRNA(Leu) + AMP + diphosphate. This chain is Leucine--tRNA ligase, found in Rippkaea orientalis (strain PCC 8801 / RF-1) (Cyanothece sp. (strain PCC 8801)).